A 192-amino-acid polypeptide reads, in one-letter code: MNAIWIAVAAVSLLGLAFGAILGYASRRFAVEDDPVVEKIDEILPQSQCGQCGYPGCRPYAEAISCNGEKINRCAPGGEAVMLKIAELLNVEPQPLDGEAQELTPARMVAFIDENNCIGCTKCIQACPVDAIVGATRAMHTVMSDLCTGCNLCVDPCPTHCISLQPVAETPDSWKWDLNTIPVRIIPVEHHA.

A hydrophobic region spans residues Met1–Ser26. The 60-residue stretch at Glu32–Val91 folds into the 4Fe-4S domain. The [4Fe-4S] cluster site is built by Cys49, Cys52, Cys57, Cys74, Cys117, Cys120, Cys123, Cys127, Cys147, Cys150, Cys153, and Cys157. 2 4Fe-4S ferredoxin-type domains span residues Met108 to Arg137 and Ala138 to Val167.

The protein belongs to the 4Fe4S bacterial-type ferredoxin family. RnfB subfamily. The complex is composed of six subunits: RsxA, RsxB, RsxC, RsxD, RsxE and RsxG. [4Fe-4S] cluster is required as a cofactor.

The protein localises to the cell inner membrane. Functionally, part of a membrane-bound complex that couples electron transfer with translocation of ions across the membrane. Required to maintain the reduced state of SoxR. The sequence is that of Ion-translocating oxidoreductase complex subunit B from Escherichia coli O17:K52:H18 (strain UMN026 / ExPEC).